A 147-amino-acid polypeptide reads, in one-letter code: Hemoglobin subunit beta (147 aa).

V2 carries the post-translational modification N-acetylvaline. In terms of domain architecture, Globin spans 3-147 (HLTGEEKSAV…VANALAHKYH (145 aa)). T13 bears the Phosphothreonine mark. S45 carries the phosphoserine modification. K60 carries the N6-acetyllysine modification. A heme b-binding site is contributed by H64. K83 is subject to N6-acetyllysine. H93 serves as a coordination point for heme b. S-nitrosocysteine is present on C94. The residue at position 145 (K145) is an N6-acetyllysine.

It belongs to the globin family. In terms of assembly, heterotetramer of two alpha chains and two beta chains. As to expression, red blood cells.

Functionally, involved in oxygen transport from the lung to the various peripheral tissues. The polypeptide is Hemoglobin subunit beta (HBB) (Callithrix jacchus (White-tufted-ear marmoset)).